The following is a 294-amino-acid chain: Large ribosomal subunit protein uL2 (294 aa).

Disordered stretches follow at residues 1 to 37 (MGIRTFRPYTPSTRHMTVSNFEELSRDENGKRPRPEK) and 228 to 294 (GSVM…RAAQ). The segment covering 10 to 22 (TPSTRHMTVSNFE) has biased composition (polar residues). Residues 23–37 (ELSRDENGKRPRPEK) show a composition bias toward basic and acidic residues. Over residues 264-285 (KTRKRNKPSNKFIVRGRRRGGR) the composition is skewed to basic residues.

The protein belongs to the universal ribosomal protein uL2 family. As to quaternary structure, part of the 50S ribosomal subunit. Forms a bridge to the 30S subunit in the 70S ribosome.

Its function is as follows. One of the primary rRNA binding proteins. Required for association of the 30S and 50S subunits to form the 70S ribosome, for tRNA binding and peptide bond formation. It has been suggested to have peptidyltransferase activity; this is somewhat controversial. Makes several contacts with the 16S rRNA in the 70S ribosome. In Synechococcus sp. (strain JA-3-3Ab) (Cyanobacteria bacterium Yellowstone A-Prime), this protein is Large ribosomal subunit protein uL2.